Reading from the N-terminus, the 602-residue chain is Adenylosuccinate synthetase (602 aa).

GTP is bound by residues 74–80 and 104–106; these read GDEGKGK and GHT. Residue D75 is the Proton acceptor of the active site. Positions 75 and 104 each coordinate Mg(2+). Residues 75 to 78, 102 to 105, T189, K203, Q315, T331, and K459 contribute to the IMP site; these read DEGK and NAGH. H105 acts as the Proton donor in catalysis. 455 to 461 is a binding site for substrate; sequence AVTKKPR. Residues R461 and 589-591 contribute to the GTP site; that span reads GNG.

This sequence belongs to the adenylosuccinate synthetase family. As to quaternary structure, homodimer. The cofactor is Mg(2+).

It is found in the cytoplasm. It carries out the reaction IMP + L-aspartate + GTP = N(6)-(1,2-dicarboxyethyl)-AMP + GDP + phosphate + 2 H(+). Its pathway is purine metabolism; AMP biosynthesis via de novo pathway; AMP from IMP: step 1/2. Its function is as follows. Plays an important role in the salvage pathway for purine nucleotide biosynthesis. Catalyzes the first committed step in the biosynthesis of AMP from IMP. The polypeptide is Adenylosuccinate synthetase (Trypanosoma brucei gambiense (strain MHOM/CI/86/DAL972)).